We begin with the raw amino-acid sequence, 434 residues long: UDP-N-acetylmuramoylalanine--D-glutamate ligase (434 aa).

113–119 (GSNGKST) contacts ATP.

Belongs to the MurCDEF family.

It is found in the cytoplasm. It catalyses the reaction UDP-N-acetyl-alpha-D-muramoyl-L-alanine + D-glutamate + ATP = UDP-N-acetyl-alpha-D-muramoyl-L-alanyl-D-glutamate + ADP + phosphate + H(+). The protein operates within cell wall biogenesis; peptidoglycan biosynthesis. Its function is as follows. Cell wall formation. Catalyzes the addition of glutamate to the nucleotide precursor UDP-N-acetylmuramoyl-L-alanine (UMA). This chain is UDP-N-acetylmuramoylalanine--D-glutamate ligase, found in Pasteurella multocida (strain Pm70).